The chain runs to 459 residues: tRNA modification GTPase MnmE (459 aa).

3 residues coordinate (6S)-5-formyl-5,6,7,8-tetrahydrofolate: Arg-20, Glu-85, and Arg-124. The region spanning 221–380 (GISTVIIGRP…LEEAIQSLFF (160 aa)) is the TrmE-type G domain. Asn-231 is a K(+) binding site. Residues 231–236 (NVGKSS), 250–256 (TDIPGTT), and 275–278 (DTAG) contribute to the GTP site. A Mg(2+)-binding site is contributed by Ser-235. The K(+) site is built by Thr-250, Ile-252, and Thr-255. A Mg(2+)-binding site is contributed by Thr-256. Residue Lys-459 coordinates (6S)-5-formyl-5,6,7,8-tetrahydrofolate.

It belongs to the TRAFAC class TrmE-Era-EngA-EngB-Septin-like GTPase superfamily. TrmE GTPase family. Homodimer. Heterotetramer of two MnmE and two MnmG subunits. K(+) serves as cofactor.

The protein localises to the cytoplasm. In terms of biological role, exhibits a very high intrinsic GTPase hydrolysis rate. Involved in the addition of a carboxymethylaminomethyl (cmnm) group at the wobble position (U34) of certain tRNAs, forming tRNA-cmnm(5)s(2)U34. In Bacillus licheniformis (strain ATCC 14580 / DSM 13 / JCM 2505 / CCUG 7422 / NBRC 12200 / NCIMB 9375 / NCTC 10341 / NRRL NRS-1264 / Gibson 46), this protein is tRNA modification GTPase MnmE.